The primary structure comprises 158 residues: Glycosyl-phosphatidylinositol-anchored molecule-like protein (158 aa).

The signal sequence occupies residues 1-17 (MLLFALLLAMELPLVAA). A UPAR/Ly6 domain is found at 29 to 134 (LRCHDCAVIN…DEVTEEELPE (106 aa)). Intrachain disulfides connect Cys-31/Cys-55, Cys-34/Cys-42, Cys-48/Cys-73, Cys-77/Cys-104, and Cys-105/Cys-110.

The protein localises to the cell membrane. Functionally, may play a role in the apoptotic pathway or cell-cycle regulation induced by p53/TP53 after DNA damage. The chain is Glycosyl-phosphatidylinositol-anchored molecule-like protein (GML) from Homo sapiens (Human).